We begin with the raw amino-acid sequence, 392 residues long: Major outer membrane protein P.IA (392 aa).

The first 19 residues, 1 to 19, serve as a signal peptide directing secretion; the sequence is MRKKLTALVLSALPLAAVA.

Belongs to the Gram-negative porin family. In terms of assembly, homotrimer.

Its subcellular location is the cell outer membrane. Serves as a slightly cation selective porin. Major antigen on the gonococcal cell surface and it may have pathogenic properties in addition to its porin activity. The sequence is that of Major outer membrane protein P.IA (porA) from Neisseria meningitidis serogroup B (strain ATCC BAA-335 / MC58).